The primary structure comprises 299 residues: Acetylglutamate kinase (299 aa).

Residues 62-63 (GG), Arg-84, and Asn-188 each bind substrate.

The protein belongs to the acetylglutamate kinase family. ArgB subfamily.

It localises to the cytoplasm. The catalysed reaction is N-acetyl-L-glutamate + ATP = N-acetyl-L-glutamyl 5-phosphate + ADP. The protein operates within amino-acid biosynthesis; L-arginine biosynthesis; N(2)-acetyl-L-ornithine from L-glutamate: step 2/4. Catalyzes the ATP-dependent phosphorylation of N-acetyl-L-glutamate. This chain is Acetylglutamate kinase, found in Methanosarcina acetivorans (strain ATCC 35395 / DSM 2834 / JCM 12185 / C2A).